We begin with the raw amino-acid sequence, 204 residues long: ATP phosphoribosyltransferase (204 aa).

This sequence belongs to the ATP phosphoribosyltransferase family. Short subfamily. In terms of assembly, heteromultimer composed of HisG and HisZ subunits.

The protein resides in the cytoplasm. The enzyme catalyses 1-(5-phospho-beta-D-ribosyl)-ATP + diphosphate = 5-phospho-alpha-D-ribose 1-diphosphate + ATP. Its pathway is amino-acid biosynthesis; L-histidine biosynthesis; L-histidine from 5-phospho-alpha-D-ribose 1-diphosphate: step 1/9. Its function is as follows. Catalyzes the condensation of ATP and 5-phosphoribose 1-diphosphate to form N'-(5'-phosphoribosyl)-ATP (PR-ATP). Has a crucial role in the pathway because the rate of histidine biosynthesis seems to be controlled primarily by regulation of HisG enzymatic activity. The chain is ATP phosphoribosyltransferase from Hydrogenobaculum sp. (strain Y04AAS1).